The sequence spans 82 residues: Acyl carrier protein (82 aa).

In terms of domain architecture, Carrier spans 4–79 (PEMESRLKKI…DALNYIEQKL (76 aa)). An O-(pantetheine 4'-phosphoryl)serine modification is found at serine 39.

The protein belongs to the acyl carrier protein (ACP) family. Post-translationally, 4'-phosphopantetheine is transferred from CoA to a specific serine of apo-ACP by AcpS. This modification is essential for activity because fatty acids are bound in thioester linkage to the sulfhydryl of the prosthetic group.

It is found in the cytoplasm. It participates in lipid metabolism; fatty acid biosynthesis. Functionally, carrier of the growing fatty acid chain in fatty acid biosynthesis. In Roseiflexus sp. (strain RS-1), this protein is Acyl carrier protein.